Here is an 85-residue protein sequence, read N- to C-terminus: Follicular dendritic cell secreted peptide (85 aa).

An N-terminal signal peptide occupies residues 1-17 (MKKVLLLITAILAVAVG). The O-glycosylated at one site stretch occupies residues 75–83 (SAPTTPLPS).

Post-translationally, O-glycosylated with core 1 or possibly core 8 glycans. In terms of tissue distribution, abundantly expressed in tonsil, lymph node, and trachea; strong expression in prostate; lower expression in thyroid, stomach, and colon.

It is found in the secreted. Functionally, can bind to the surface of B-lymphoma cells, but not T-lymphoma cells, consistent with a function as a secreted mediator acting upon B-cells. The chain is Follicular dendritic cell secreted peptide (FDCSP) from Homo sapiens (Human).